The chain runs to 229 residues: Ribonuclease 3 (229 aa).

An RNase III domain is found at 5-127; it reads LSRLERQLGY…LIGAIYLDAG (123 aa). Glu40 provides a ligand contact to Mg(2+). Asp44 is an active-site residue. The Mg(2+) site is built by Asp113 and Glu116. The active site involves Glu116. The DRBM domain maps to 154–224; that stretch reads DPKTRLQEFL…AAAALIALGV (71 aa).

It belongs to the ribonuclease III family. In terms of assembly, homodimer. The cofactor is Mg(2+).

The protein localises to the cytoplasm. It catalyses the reaction Endonucleolytic cleavage to 5'-phosphomonoester.. Digests double-stranded RNA. Involved in the processing of primary rRNA transcript to yield the immediate precursors to the large and small rRNAs (23S and 16S). Processes some mRNAs, and tRNAs when they are encoded in the rRNA operon. Processes pre-crRNA and tracrRNA of type II CRISPR loci if present in the organism. The chain is Ribonuclease 3 from Pseudomonas syringae pv. syringae (strain B728a).